Consider the following 312-residue polypeptide: Olfactory receptor 10D3 (312 aa).

Residues 1 to 26 are Extracellular-facing; the sequence is MEIKNCSVVTEFILLGIPHTEGFETL. Asn5 carries an N-linked (GlcNAc...) asparagine glycan. Residues 27 to 47 traverse the membrane as a helical segment; it reads LFVLFLPFYACTLVGNVSILV. The Cytoplasmic segment spans residues 48–57; it reads AVISSTRLHT. Residues 58-78 traverse the membrane as a helical segment; that stretch reads PMYFFLGNLSVFDMGFSSVTC. The Extracellular segment spans residues 79 to 97; the sequence is PKMLFYLMGLSRLISYQDC. Cys97 and Cys179 are disulfide-bonded. A helical transmembrane segment spans residues 98–118; the sequence is VSQLFFFHFLGSIECFLYTVM. At 119-139 the chain is on the cytoplasmic side; that stretch reads AYDRFAAICHPLRYSVIMNSK. Residues 140–160 form a helical membrane-spanning segment; the sequence is ICVALAVGTWLLGCFHSSVLT. Residues 161–197 lie on the Extracellular side of the membrane; sequence SLTFTLPYCGPNEVDHFFCDIPAILPLASADTSLAQR. Residues 198–218 form a helical membrane-spanning segment; that stretch reads VSFTNVGLVSLVCFLLILLSY. The Cytoplasmic portion of the chain corresponds to 219 to 239; that stretch reads TRITISILSIQSTEGRQRAFS. Residues 240–260 form a helical membrane-spanning segment; the sequence is TCSAHLIAILCAYGPIITIYL. Residues 261–266 are Extracellular-facing; sequence QPTPNP. The chain crosses the membrane as a helical span at residues 267-287; that stretch reads MLGTVVQILMNLVGPMLNPLI. Over 288-312 the chain is Cytoplasmic; sequence YTLRNKEVKIALKKILHGKGSVSEG.

It belongs to the G-protein coupled receptor 1 family.

The protein resides in the cell membrane. Its function is as follows. Potential odorant receptor. The protein is Olfactory receptor 10D3 of Mus musculus (Mouse).